The primary structure comprises 392 residues: DNA-directed RNA polymerase subunit Rpo1C (392 aa).

This sequence belongs to the RNA polymerase beta' chain family. In terms of assembly, part of the 13-subunit RNA polymerase complex.

It localises to the cytoplasm. The catalysed reaction is RNA(n) + a ribonucleoside 5'-triphosphate = RNA(n+1) + diphosphate. Functionally, DNA-dependent RNA polymerase (RNAP) catalyzes the transcription of DNA into RNA using the four ribonucleoside triphosphates as substrates. Forms part of the jaw domain. The chain is DNA-directed RNA polymerase subunit Rpo1C from Saccharolobus solfataricus (strain ATCC 35092 / DSM 1617 / JCM 11322 / P2) (Sulfolobus solfataricus).